A 567-amino-acid chain; its full sequence is Zinc finger protein 512 (567 aa).

A disordered region spans residues 1 to 34 (MSSRLGAVPATPGPTPFKQQRSTRIVGAKNSRTQ). Residues Lys18 and Lys84 each participate in a glycyl lysine isopeptide (Lys-Gly) (interchain with G-Cter in SUMO2) cross-link. A disordered region spans residues 87 to 148 (AASHVEGPGG…QTRRIRKEPP (62 aa)). Basic residues predominate over residues 119-130 (KKHKLYGRKQRP). Residues 197–220 (FTCHHCGKQLRSLAGMKYHVMANH) form a C2H2-type 1 zinc finger. Lys227 is covalently cross-linked (Glycyl lysine isopeptide (Lys-Gly) (interchain with G-Cter in SUMO2)). A C2H2-type 2 zinc finger spans residues 287–310 (LKCHHCGKPYRSKAGLAYHLRSEH). A Glycyl lysine isopeptide (Lys-Gly) (interchain with G-Cter in SUMO2) cross-link involves residue Lys333. A C2H2-type 3; atypical zinc finger spans residues 406-430 (IQCPNQGCEAVYSSVSGLKAHLGSC). The C2H2-type 3 zinc-finger motif lies at 440–463 (YKCLLCQKEFVSESGVKYHINSVH). Residues 485–494 (KQRQQEEEKR) are compositionally biased toward basic and acidic residues. The interval 485–567 (KQRQQEEEKR…PKTNHKRGKK (83 aa)) is disordered. The span at 495–508 (RQQHRSRRSLRRRQ) shows a compositional bias: basic residues. Positions 523-544 (VGKDQRRNHEELLVATSRKEPE) are enriched in basic and acidic residues. Positions 556-567 (RSPKTNHKRGKK) are enriched in basic residues.

Belongs to the krueppel C2H2-type zinc-finger protein family.

Its subcellular location is the nucleus. Its function is as follows. May be involved in transcriptional regulation. The sequence is that of Zinc finger protein 512 (ZNF512) from Bos taurus (Bovine).